The primary structure comprises 179 residues: MYEYLDRRYALALYEVAEEKNKVEEYLNDLREICEIIYGNNELYEVIKHPQISTVRKKKTFRNIFEGKIDDELLSFLMVLIEKDRILYLREKLKEMEKIHLERNNTLLAEVKSVVPLTEDEVTRLVEKLENKYSKKILLKQEIDRSIIGGLYVRVGDDVIDGTVKSRLDDMKQIMLKRE.

The protein belongs to the ATPase delta chain family. F-type ATPases have 2 components, F(1) - the catalytic core - and F(0) - the membrane proton channel. F(1) has five subunits: alpha(3), beta(3), gamma(1), delta(1), epsilon(1). F(0) has three main subunits: a(1), b(2) and c(10-14). The alpha and beta chains form an alternating ring which encloses part of the gamma chain. F(1) is attached to F(0) by a central stalk formed by the gamma and epsilon chains, while a peripheral stalk is formed by the delta and b chains.

It is found in the cell membrane. In terms of biological role, f(1)F(0) ATP synthase produces ATP from ADP in the presence of a proton or sodium gradient. F-type ATPases consist of two structural domains, F(1) containing the extramembraneous catalytic core and F(0) containing the membrane proton channel, linked together by a central stalk and a peripheral stalk. During catalysis, ATP synthesis in the catalytic domain of F(1) is coupled via a rotary mechanism of the central stalk subunits to proton translocation. Its function is as follows. This protein is part of the stalk that links CF(0) to CF(1). It either transmits conformational changes from CF(0) to CF(1) or is implicated in proton conduction. This Clostridium perfringens (strain SM101 / Type A) protein is ATP synthase subunit delta.